A 471-amino-acid chain; its full sequence is Variant surface glycoprotein WRATAT A (471 aa).

The signal sequence occupies residues 1 to 18; that stretch reads MSVLFLLLAITRTASVKA. N-linked (GlcNAc...) asparagine glycans are attached at residues asparagine 61 and asparagine 133. Residues 373 to 457 form a disordered region; sequence QEQTLATTGT…ANTTGSSNSF (85 aa). Low complexity predominate over residues 379-392; the sequence is TTGTKSSSPQSTQQ. 2 disulfide bridges follow: cysteine 401–cysteine 414 and cysteine 410–cysteine 427. The segment covering 401 to 447 has biased composition (basic and acidic residues); that stretch reads CNDKAKETECNSPCKWDKEEKDEKKRCKLSEEGKQAEKENQEGKDGK. Positions 448–457 are enriched in polar residues; sequence ANTTGSSNSF. N-linked (GlcNAc...) asparagine glycosylation is present at asparagine 449. Serine 454 carries the GPI-anchor amidated serine lipid modification. Positions 455–471 are cleaved as a propeptide — removed in mature form; it reads NSFVIKTSPLLLAVLLL.

It localises to the cell membrane. VSG forms a coat on the surface of the parasite. The trypanosome evades the immune response of the host by expressing a series of antigenically distinct VSGs from an estimated 1000 VSG genes. This chain is Variant surface glycoprotein WRATAT A, found in Trypanosoma brucei rhodesiense.